A 398-amino-acid polypeptide reads, in one-letter code: S-adenosylmethionine decarboxylase proenzyme (398 aa).

Catalysis depends on residues Glu-18 and Glu-21. Ser-78 serves as the catalytic Schiff-base intermediate with substrate; via pyruvic acid. Position 78 is a pyruvic acid (Ser); by autocatalysis (Ser-78). Catalysis depends on Cys-92, which acts as the Proton donor; for catalytic activity. Active-site proton acceptor; for processing activity residues include Ser-243 and His-256.

This sequence belongs to the eukaryotic AdoMetDC family. Requires pyruvate as cofactor. Is synthesized initially as an inactive proenzyme. Formation of the active enzyme involves a self-maturation process in which the active site pyruvoyl group is generated from an internal serine residue via an autocatalytic post-translational modification. Two non-identical subunits are generated from the proenzyme in this reaction, and the pyruvate is formed at the N-terminus of the alpha chain, which is derived from the carboxyl end of the proenzyme. The post-translation cleavage follows an unusual pathway, termed non-hydrolytic serinolysis, in which the side chain hydroxyl group of the serine supplies its oxygen atom to form the C-terminus of the beta chain, while the remainder of the serine residue undergoes an oxidative deamination to produce ammonia and the pyruvoyl group blocking the N-terminus of the alpha chain.

It carries out the reaction S-adenosyl-L-methionine + H(+) = S-adenosyl 3-(methylsulfanyl)propylamine + CO2. It participates in amine and polyamine biosynthesis; S-adenosylmethioninamine biosynthesis; S-adenosylmethioninamine from S-adenosyl-L-methionine: step 1/1. In Oryza sativa subsp. japonica (Rice), this protein is S-adenosylmethionine decarboxylase proenzyme (SAMDC).